The primary structure comprises 204 residues: DNA-directed RNA polymerase subunit gamma (204 aa).

C34, C36, C49, and C52 together coordinate Zn(2+).

The protein belongs to the RNA polymerase beta' chain family. RpoC1 subfamily. In cyanobacteria the RNAP catalytic core is composed of 2 alpha, 1 beta, 1 beta', 1 gamma and 1 omega subunit. When a sigma factor is associated with the core the holoenzyme is formed, which can initiate transcription. Zn(2+) is required as a cofactor.

It catalyses the reaction RNA(n) + a ribonucleoside 5'-triphosphate = RNA(n+1) + diphosphate. In terms of biological role, DNA-dependent RNA polymerase catalyzes the transcription of DNA into RNA using the four ribonucleoside triphosphates as substrates. This Prochlorococcus marinus (strain DV1) protein is DNA-directed RNA polymerase subunit gamma (rpoC1).